Reading from the N-terminus, the 585-residue chain is MAEAGTGFLEQLKSCIVWSWTYLWTVWFFIVLFLVYILRVPLKINDNLSTVSMFLNTLTPKFYVALTGTSSLISGLILIFEWWYFRKYGTSFIEQVSVSHLRPLLGGVDNNSSNNSNSSNGDSDSNRQSVSECKVWRNPLNLFRGAEYNRYTWVTGREPLTYYDMNLSAQDHQTFFTCDSDHLRPADAIMQKAWRERNPQARISAAHEALEINEIRSRVEVPLIASSTIWEIKLLPKCATAYILLAEEEATTIAEAEKLFKQALKAGDGCYRRSQQLQHHGSQYEAQHRRDTNVLVYIKRRLAMCARRLGRTREAVKMMRDLMKEFPLLSMFNIHENLLEALLELQAYADVQAVLAKYDDISLPKSATICYTAALLKARAVSDKFSPEAASRRGLSTAEMNAVEAIHRAVEFNPHVPKYLLEMKSLILPPEHILKRGDSEAIAYAFFHLAHWKRVEGALNLLHCTWEGTFRMIPYPLEKGHLFYPYPICTETADRELLPSFHEVSVYPKKELPFFILFTAGLCSFTAMLALLTHQFPELMGVFAKAMIDIFCSAEFRDWNCKSIFMRVEDELEIPPASQSQHFQN.

A helical membrane pass occupies residues 15–35 (CIVWSWTYLWTVWFFIVLFLV). Asparagine 47 is a glycosylation site (N-linked (GlcNAc...) asparagine). The helical transmembrane segment at 62–82 (FYVALTGTSSLISGLILIFEW) threads the bilayer. Serine 386 is modified (phosphoserine). The chain crosses the membrane as a helical span at residues 512–532 (LPFFILFTAGLCSFTAMLALL).

Belongs to the ST7 family.

Its subcellular location is the membrane. The sequence is that of Suppressor of tumorigenicity 7 protein (ST7) from Callithrix jacchus (White-tufted-ear marmoset).